The primary structure comprises 437 residues: 23S rRNA (uracil(1939)-C(5))-methyltransferase RlmD (437 aa).

The TRAM domain maps to 10 to 68 (SAPRNTTFVAEILDLDYQGRGVAKVQGKTWFIENALPQEKVEVRIVDEKRHYGHGISCK). Cys-81, Cys-87, Cys-90, and Cys-167 together coordinate [4Fe-4S] cluster. Residues Gln-270, Phe-299, Asn-304, Glu-320, Asn-347, and Asp-368 each coordinate S-adenosyl-L-methionine. Cys-394 (nucleophile) is an active-site residue.

Belongs to the class I-like SAM-binding methyltransferase superfamily. RNA M5U methyltransferase family. RlmD subfamily.

The catalysed reaction is uridine(1939) in 23S rRNA + S-adenosyl-L-methionine = 5-methyluridine(1939) in 23S rRNA + S-adenosyl-L-homocysteine + H(+). In terms of biological role, catalyzes the formation of 5-methyl-uridine at position 1939 (m5U1939) in 23S rRNA. This is 23S rRNA (uracil(1939)-C(5))-methyltransferase RlmD from Pasteurella multocida (strain Pm70).